The sequence spans 338 residues: Methionine import ATP-binding protein MetN (338 aa).

Residues 2–241 (ISLDGIRKVF…PKEHITKEFV (240 aa)) form the ABC transporter domain. Position 38 to 45 (38 to 45 (GYSGAGKS)) interacts with ATP.

This sequence belongs to the ABC transporter superfamily. Methionine importer (TC 3.A.1.24) family. As to quaternary structure, the complex is composed of two ATP-binding proteins (MetN), two transmembrane proteins (MetI) and a solute-binding protein (MetQ).

The protein localises to the cell membrane. It catalyses the reaction L-methionine(out) + ATP + H2O = L-methionine(in) + ADP + phosphate + H(+). The catalysed reaction is D-methionine(out) + ATP + H2O = D-methionine(in) + ADP + phosphate + H(+). Part of the ABC transporter complex MetNIQ involved in methionine import. Responsible for energy coupling to the transport system. The protein is Methionine import ATP-binding protein MetN of Halalkalibacterium halodurans (strain ATCC BAA-125 / DSM 18197 / FERM 7344 / JCM 9153 / C-125) (Bacillus halodurans).